We begin with the raw amino-acid sequence, 469 residues long: Cysteine--tRNA ligase (469 aa).

A Zn(2+)-binding site is contributed by cysteine 33. The 'HIGH' region signature appears at 35–45 (ATVQGLPHIGH). Residues cysteine 211, histidine 236, and glutamate 240 each contribute to the Zn(2+) site. A 'KMSKS' region motif is present at residues 267 to 271 (KMSKS). Lysine 270 serves as a coordination point for ATP.

Belongs to the class-I aminoacyl-tRNA synthetase family. In terms of assembly, monomer. Zn(2+) is required as a cofactor.

It is found in the cytoplasm. The catalysed reaction is tRNA(Cys) + L-cysteine + ATP = L-cysteinyl-tRNA(Cys) + AMP + diphosphate. The protein is Cysteine--tRNA ligase (cysS) of Mycobacterium tuberculosis (strain CDC 1551 / Oshkosh).